The primary structure comprises 223 residues: MADAATISKLEEGFKKLQGATDCKDVFDQLKQTDKHPNKDFGDVNQFVNVDPDGKFVISTRVRLIDDHFLFKEGDRFLQAANACRYWPSGRGIFHNDKKIISMQMGGDLGQVYRRLVSAVNEIEKRVPFSHHDRLGFLTFCPTNLGTTVRASVHIKLPKXEKLEEVAGKYSLQVRGTRGEHTEAEGGVYDISNKRRMGLTEFQAVKEMQDGILELIKIEKEMQ.

The region spanning 56–222 (FVISTRVRLI…LELIKIEKEM (167 aa)) is the Phosphagen kinase C-terminal domain. ATP contacts are provided by residues 59–63 (STRVR) and His68. L-arginine is bound at residue Cys141. Residues 150 to 154 (RASVH) and 175 to 180 (RGTRGE) contribute to the ATP site. L-arginine is bound at residue Glu180.

This sequence belongs to the ATP:guanido phosphotransferase family.

The catalysed reaction is L-arginine + ATP = N(omega)-phospho-L-arginine + ADP + H(+). In Chionoecetes opilio (Atlantic snow crab), this protein is Arginine kinase.